The sequence spans 384 residues: Transcription factor iacI (384 aa).

The protein localises to the nucleus. Its function is as follows. Transcription factor; part of the gene cluster that mediates the biosynthesis of iso-A82775C, a enylepoxycyclohexane and biosynthetic precursor of the chloropestolide anticancer natural products. This chain is Transcription factor iacI, found in Pestalotiopsis fici (strain W106-1 / CGMCC3.15140).